The chain runs to 274 residues: NAD(P)H-quinone oxidoreductase subunit K, chloroplastic (274 aa).

Polar residues-rich tracts occupy residues 1–10 (MVINQKNLSS) and 18–27 (SGSQSSTKAD). The interval 1 to 27 (MVINQKNLSSPVAPYDKSGSQSSTKAD) is disordered. [4Fe-4S] cluster contacts are provided by cysteine 90, cysteine 91, cysteine 155, and cysteine 186.

This sequence belongs to the complex I 20 kDa subunit family. As to quaternary structure, NDH is composed of at least 16 different subunits, 5 of which are encoded in the nucleus. The cofactor is [4Fe-4S] cluster.

Its subcellular location is the plastid. The protein resides in the chloroplast thylakoid membrane. It catalyses the reaction a plastoquinone + NADH + (n+1) H(+)(in) = a plastoquinol + NAD(+) + n H(+)(out). The catalysed reaction is a plastoquinone + NADPH + (n+1) H(+)(in) = a plastoquinol + NADP(+) + n H(+)(out). Functionally, NDH shuttles electrons from NAD(P)H:plastoquinone, via FMN and iron-sulfur (Fe-S) centers, to quinones in the photosynthetic chain and possibly in a chloroplast respiratory chain. The immediate electron acceptor for the enzyme in this species is believed to be plastoquinone. Couples the redox reaction to proton translocation, and thus conserves the redox energy in a proton gradient. The sequence is that of NAD(P)H-quinone oxidoreductase subunit K, chloroplastic from Chlorokybus atmophyticus (Soil alga).